An 854-amino-acid polypeptide reads, in one-letter code: DNA mismatch repair protein MutS (854 aa).

608 to 615 (GPNMAGKS) contributes to the ATP binding site.

The protein belongs to the DNA mismatch repair MutS family.

This protein is involved in the repair of mismatches in DNA. It is possible that it carries out the mismatch recognition step. This protein has a weak ATPase activity. In Leuconostoc mesenteroides subsp. mesenteroides (strain ATCC 8293 / DSM 20343 / BCRC 11652 / CCM 1803 / JCM 6124 / NCDO 523 / NBRC 100496 / NCIMB 8023 / NCTC 12954 / NRRL B-1118 / 37Y), this protein is DNA mismatch repair protein MutS.